Here is a 1796-residue protein sequence, read N- to C-terminus: Y' element ATP-dependent helicase protein 1 copy 5 (1796 aa).

A disordered region spans residues 743–767 (AGEAASSDHDQKISRVTRKRPREPK). Residues 797–974 (EIYMADTPSV…LQRIGLTGLA (178 aa)) form the Helicase ATP-binding domain. 810–817 (APPGYGKT) contributes to the ATP binding site. A Helicase C-terminal domain is found at 1031–1180 (KLLLALFEIE…EFYGLESKKG (150 aa)). Disordered regions lie at residues 1254-1278 (ANASTNATTNSSTNATTTASTNVRT) and 1294-1421 (TTES…DINK). Residues 1294 to 1397 (TTESTNSSTN…ATTTESTNAS (104 aa)) show a composition bias toward low complexity. Positions 1398–1421 (AKEDANKDGNAEDNRFHPVTDINK) are enriched in basic and acidic residues.

It belongs to the helicase family. Yeast subtelomeric Y' repeat subfamily.

Its function is as follows. Catalyzes DNA unwinding and is involved in telomerase-independent telomere maintenance. In Saccharomyces cerevisiae (strain ATCC 204508 / S288c) (Baker's yeast), this protein is Y' element ATP-dependent helicase protein 1 copy 5 (YRF1-5).